Reading from the N-terminus, the 500-residue chain is Maturase K (500 aa).

Belongs to the intron maturase 2 family. MatK subfamily.

It is found in the plastid. It localises to the chloroplast. Usually encoded in the trnK tRNA gene intron. Probably assists in splicing its own and other chloroplast group II introns. This chain is Maturase K, found in Argentina anserina (Silverweed cinquefoil).